A 543-amino-acid polypeptide reads, in one-letter code: Germacrene A synthase (543 aa).

4 residues coordinate Mg(2+): Asp-296, Asp-300, Asp-439, and Glu-447. The short motif at 296 to 300 is the DDXXD motif element; the sequence is DDTYD.

The protein belongs to the terpene synthase family. Tpsa subfamily. The cofactor is Mg(2+). Mn(2+) is required as a cofactor. Barely detectable in leaves.

It localises to the plastid. The protein resides in the chloroplast. The enzyme catalyses (2E,6E)-farnesyl diphosphate = germacrene A + diphosphate. It catalyses the reaction (2E,6E)-farnesyl diphosphate = (1S,2S,4R)-beta-elemene + diphosphate. It participates in secondary metabolite biosynthesis; terpenoid biosynthesis. Functionally, sesquiterpene synthase involved in the biosynthesis of volatile compounds widely used in aromatherapy and folk medicine, and present in culinary herbs. Mediates the conversion of (2E,6E)-farnesyl diphosphate (FPP) into germacrene A and beta-elemene. Not able to use (2E)-geranyl diphosphate (GPP) as substrate. The polypeptide is Germacrene A synthase (Lavandula viridis (Green lavender)).